Here is a 140-residue protein sequence, read N- to C-terminus: Required for drug-induced death protein 1 (140 aa).

Positions 1–95 (MTVGARLRSK…DKPKKRYRRK (95 aa)) are disordered. Positions 29–53 (EETDAIVEHLEGEDEDPESQDCERE) are enriched in acidic residues. The helical transmembrane segment at 118 to 140 (LQGFAAAYSAPFGVATSVVSFVR) threads the bilayer.

The protein localises to the membrane. Regulates drug efflux through modulation of ABCB1 localization and activity. This chain is Required for drug-induced death protein 1, found in Rattus norvegicus (Rat).